A 237-amino-acid polypeptide reads, in one-letter code: Phosphoserine phosphatase (237 aa).

D30 functions as the Nucleophile in the catalytic mechanism. D30 and D32 together coordinate Mg(2+). D32 serves as the catalytic Proton donor. Residues E39, R76, S120–G121, and K169 contribute to the substrate site. Residue D192 participates in Mg(2+) binding. N195 provides a ligand contact to substrate.

The protein belongs to the HAD-like hydrolase superfamily. SerB family. Mg(2+) is required as a cofactor.

It carries out the reaction O-phospho-L-serine + H2O = L-serine + phosphate. The enzyme catalyses O-phospho-D-serine + H2O = D-serine + phosphate. It functions in the pathway amino-acid biosynthesis; L-serine biosynthesis; L-serine from 3-phospho-D-glycerate: step 3/3. In terms of biological role, catalyzes the dephosphorylation of phosphoserine (P-Ser) in vitro. Also catalyzes the dephosphorylation of phosphothreonine (P-Thr) in vitro. This is Phosphoserine phosphatase from Albidiferax ferrireducens (strain ATCC BAA-621 / DSM 15236 / T118) (Rhodoferax ferrireducens).